Here is a 120-residue protein sequence, read N- to C-terminus: Ribonuclease P protein component (120 aa).

Belongs to the RnpA family. As to quaternary structure, consists of a catalytic RNA component (M1 or rnpB) and a protein subunit.

The enzyme catalyses Endonucleolytic cleavage of RNA, removing 5'-extranucleotides from tRNA precursor.. RNaseP catalyzes the removal of the 5'-leader sequence from pre-tRNA to produce the mature 5'-terminus. It can also cleave other RNA substrates such as 4.5S RNA. The protein component plays an auxiliary but essential role in vivo by binding to the 5'-leader sequence and broadening the substrate specificity of the ribozyme. This chain is Ribonuclease P protein component, found in Chlamydia trachomatis serovar D (strain ATCC VR-885 / DSM 19411 / UW-3/Cx).